The chain runs to 274 residues: MPSLAELTKSLSIAFENGDYAACEKLLPPIKIELIKNNLLIPDLSIQNDIYLNDLMITKRILEVGALASIQTFNFDSFENYFNQLKPYYFSNNHKLSESDKKSKLISLYLLNLLSQNNTTKFHSELQYLDKHIKNLEDDSLLSYPIKLDRWLMEGSYQKAWDLLQSGSQNISEFDSFTDILKSAIRDEIAKNTELSYDFLPLSNIKALLFFNNEKETEKFALERNWPIVNSKVYFNNQSKEKADYEDEMMHEEDQKTNIIEKAMDYAISIENIV.

Residues 76–251 enclose the PCI domain; the sequence is DSFENYFNQL…KADYEDEMMH (176 aa).

This sequence belongs to the proteasome subunit S14 family.

In terms of biological role, acts as a regulatory subunit of the 26S proteasome which is involved in the ATP-dependent degradation of ubiquitinated proteins. Necessary for activation of the CDC28 kinase. This is 26S proteasome regulatory subunit RPN12 (RPN12) from Saccharomyces cerevisiae (strain ATCC 204508 / S288c) (Baker's yeast).